The following is a 538-amino-acid chain: MAVAAKNIPAPDLVPVRRALLSVFDKTGLIDFARALAAAGVELVSTGGTAKAIAEAGLAVRDVSELTGFPEIMDGRVKTLHPSVHGALLGVRDDPEHAAAMRKYGIEPIDLLVSNLYPFEEVRRSGADYAAIVENIDIGGPAMIRASAKNHAYVAIVTDPGDYASVLNALEMNIGSLSLDFRKKLAAKAFARTATYDAAISGWFAEALEIEHPTWRAFGGRLTEVMRYGENPHQSAGFYVNGDKRPGVATARQLQGKQLSYNNINDTDAAFELAGEFDPSRSAAVAIIKHANPCGVAEGTSLKSAYAKALACDPVSAFGGIVAVNRTLDAEAAEDIVKTFTEVIIAPDATDEAAAIVAAKKNLRLLVTGGLPDPRSPGTTVKSVAGGLLVQGRDNAVVDDLELKVVTKRAPTPAEMADLKFAFRVAKHVKSNAIVYAKDGATVGIGAGQMSRVDSSRIAARKALDAAEAAGMTEPLTTGSVVASDAFFPFADGLLAAVAAGATAVIQPGGSMNDKDVIAAADEHGIAMVFTGVRHFRH.

An MGS-like domain is found at 8-158 (IPAPDLVPVR…KNHAYVAIVT (151 aa)).

Belongs to the PurH family.

It carries out the reaction (6R)-10-formyltetrahydrofolate + 5-amino-1-(5-phospho-beta-D-ribosyl)imidazole-4-carboxamide = 5-formamido-1-(5-phospho-D-ribosyl)imidazole-4-carboxamide + (6S)-5,6,7,8-tetrahydrofolate. The catalysed reaction is IMP + H2O = 5-formamido-1-(5-phospho-D-ribosyl)imidazole-4-carboxamide. The protein operates within purine metabolism; IMP biosynthesis via de novo pathway; 5-formamido-1-(5-phospho-D-ribosyl)imidazole-4-carboxamide from 5-amino-1-(5-phospho-D-ribosyl)imidazole-4-carboxamide (10-formyl THF route): step 1/1. It participates in purine metabolism; IMP biosynthesis via de novo pathway; IMP from 5-formamido-1-(5-phospho-D-ribosyl)imidazole-4-carboxamide: step 1/1. The chain is Bifunctional purine biosynthesis protein PurH from Mesorhizobium japonicum (strain LMG 29417 / CECT 9101 / MAFF 303099) (Mesorhizobium loti (strain MAFF 303099)).